The primary structure comprises 349 residues: Fe(3+) ions import ATP-binding protein FbpC (349 aa).

One can recognise an ABC transporter domain in the interval 7 to 237; sequence LVLKNVTKAF…PNSLFLANFM (231 aa). Position 39-46 (39-46) interacts with ATP; it reads GPSGCGKT.

It belongs to the ABC transporter superfamily. Fe(3+) ion importer (TC 3.A.1.10) family. In terms of assembly, the complex is composed of two ATP-binding proteins (FbpC), two transmembrane proteins (FbpB) and a solute-binding protein (FbpA).

The protein localises to the cell inner membrane. The enzyme catalyses Fe(3+)(out) + ATP + H2O = Fe(3+)(in) + ADP + phosphate + H(+). Functionally, part of the ABC transporter complex FbpABC involved in Fe(3+) ions import. Responsible for energy coupling to the transport system. In Pasteurella multocida (strain Pm70), this protein is Fe(3+) ions import ATP-binding protein FbpC.